The sequence spans 392 residues: Na(+)/H(+) antiporter NhaA 2 (392 aa).

11 helical membrane-spanning segments follow: residues 20 to 40, 63 to 83, 99 to 119, 127 to 147, 158 to 178, 181 to 201, 209 to 229, 265 to 285, 298 to 318, 336 to 356, and 365 to 385; these read FFAA…AALI, VEHW…GLEI, ALPG…YVAF, IGGW…VLSL, IFLS…IALF, SDLS…LVAL, LLPY…SGIH, VAFA…LSGI, VALG…ALAI, GVAA…ALAF, and EVKV…VVVL.

This sequence belongs to the NhaA Na(+)/H(+) (TC 2.A.33) antiporter family.

It is found in the cell inner membrane. The enzyme catalyses Na(+)(in) + 2 H(+)(out) = Na(+)(out) + 2 H(+)(in). Its function is as follows. Na(+)/H(+) antiporter that extrudes sodium in exchange for external protons. The protein is Na(+)/H(+) antiporter NhaA 2 of Pseudomonas savastanoi pv. phaseolicola (strain 1448A / Race 6) (Pseudomonas syringae pv. phaseolicola (strain 1448A / Race 6)).